We begin with the raw amino-acid sequence, 214 residues long: Probable GTP-binding protein EngB (214 aa).

The EngB-type G domain occupies 30 to 204 (EGFEVAFAGR…YTVLAGWMEL (175 aa)). GTP-binding positions include 38–45 (GRSNAGKS), 64–68 (GRTQL), 82–85 (DLPG), 149–152 (TKAD), and 182–185 (LFSA). Mg(2+) contacts are provided by S45 and T66.

It belongs to the TRAFAC class TrmE-Era-EngA-EngB-Septin-like GTPase superfamily. EngB GTPase family. Mg(2+) serves as cofactor.

Functionally, necessary for normal cell division and for the maintenance of normal septation. The protein is Probable GTP-binding protein EngB of Pseudomonas fluorescens (strain Pf0-1).